Consider the following 272-residue polypeptide: MNLPFRAMVSDLDGTLLTPEHLVGDLTIDTLRALEQKGVDIILATGRNHTDVSSILGKIGAERAVMITSNGARVRDLQGNLLYSNSLPEELVLELYKTPFDTSKVCMNSYQDEGWFTNKDIPAMRQFHKESGFDYNVVDFSKHHGRGTEKVFFIGKTPEDLVEVETYLRDKFGDVTTIVYSALACLEVMNKNVSKGDALKHLLESREYELKDCIAFGDGMNDVEMLSWAGKGCIMKDADIRLKMACPELEVIGSNKEESVARYLRTQFGLDY.

Asp-11 serves as the catalytic Nucleophile. Residue Asp-11 participates in Mg(2+) binding. Leu-12 is a phosphate binding site. Residue Asp-13 coordinates Mg(2+). Phosphate is bound by residues 45-46 (TG) and Lys-195. Asp-218 serves as a coordination point for Mg(2+). Asn-221 serves as a coordination point for phosphate.

It belongs to the HAD-like hydrolase superfamily. Cof family. Mg(2+) is required as a cofactor.

The polypeptide is Putative phosphatase HI_0597 (Haemophilus influenzae (strain ATCC 51907 / DSM 11121 / KW20 / Rd)).